The primary structure comprises 304 residues: GDP-6-deoxy-D-mannose reductase (304 aa).

NADP(+) is bound by residues 13–14 (FV) and 39–40 (DL). 105-106 (SG) is a substrate binding site. Tyr-131 lines the NADP(+) pocket. Substrate is bound by residues Asn-160, Arg-200, and 260–263 (RRAE).

It belongs to the NAD(P)-dependent epimerase/dehydratase family. GDP-6-deoxy-D-mannose reductase subfamily.

The catalysed reaction is GDP-alpha-D-rhamnose + NAD(+) = GDP-4-dehydro-alpha-D-rhamnose + NADH + H(+). It carries out the reaction GDP-alpha-D-rhamnose + NADP(+) = GDP-4-dehydro-alpha-D-rhamnose + NADPH + H(+). Reductase that catalyzes the conversion of GDP-6-deoxy-D-mannose to GDP-4-dehydro-6-deoxy-D-mannose (GDP-D-rhamnose). In Pseudomonas aeruginosa (strain ATCC 15692 / DSM 22644 / CIP 104116 / JCM 14847 / LMG 12228 / 1C / PRS 101 / PAO1), this protein is GDP-6-deoxy-D-mannose reductase (rmd).